Reading from the N-terminus, the 1047-residue chain is MTTPQYRQVPAQVDLPALEHAVLDFWREQKIFAKSLEQSEGRPEWVFYEGPPTANGMPGAHHIEARVFKDVFPRFRTMRGYHVGRKAGWDCHGLPVELAVEKELGFSGKQDIEAYGIAEFNAKCRESVTRHTDAFEELTTRMGYWADLQDPYRTMDPEYIESVWWSLKEIFNKGLLVQDHRVAPWCPRCGTGLSDHELAQGYETVVDPSVYVRFPLTSGPLAGEAALVVWTTTPWTLVSNTAVAAHPDVTYVVATDGEEKLVVAEPLLAKALGEGWETTGQSFTGAEMERWTYQRPFELVEFPEPAHYVVNADYVTTEDGTGLVHQSPAFGEDDLKVCRAYGLPVVNPVRPDGTFEEDVPLVGGVFFKKADEKLTEDLETRGLLFKHIPYEHSYPHCWRCHTALLYYAQPSWYIRTTAIKDRLLQENEKTNWFPDAVKHGRYGDWLNNNIDWALSRNRYWGTPLPIWRCAEDHLTVVGSRAELTELSGTDQSSLDPHRPFIDDVTFTCAQEGCSLEAVRVPEVIDAWYDSGSMPFAQWGYPYKNKELFESRYPAQFISEAIDQTRGWFYTLMAVGTLVFDKSSYENVVCLGHILAEDGRKMSKHLGNILQPIPLMDQHGADAVRWFMAAGGSPWAARRVGHGTIQEVVRKTLLTYWNTVAFQALYARTTGWAPSEADPAPADRPVLDRWLLSELHALTDQVTQALDAYDTQRAGKLLSAFVDDLSNWYVRRSRRRFWQGDKAALRTLHEVVETVTKLMAPLTPFITERVWQDLVVPVTPGAPESVHLSSWPEADLTAIDPELSKQMVLVRRLVELGRATRAESGVKTRQPLSRALIAVAGFDTLSPELHSQITEELNVASLASLSEVGGSLVDTTAKANFRALGKRFGKRVQDVAKAVAAADAAALSLALREGTASVEVDGETVTLAPDEVIITETPREGWSVASDSGATVALDLELTEELRRAGLARDAIRLIQEARKNSGLDVADRIALRWTATDPATIAALTDHSGLISDEVLATDFAQGEADDSYGAPFTDEGLSLVFRLRKQ.

The 'HIGH' region motif lies at 52 to 62; the sequence is PTANGMPGAHH. The short motif at 600-604 is the 'KMSKS' region element; sequence KMSKH. Lys-603 is an ATP binding site.

Belongs to the class-I aminoacyl-tRNA synthetase family. IleS type 2 subfamily. In terms of assembly, monomer. Requires Zn(2+) as cofactor.

The protein localises to the cytoplasm. The catalysed reaction is tRNA(Ile) + L-isoleucine + ATP = L-isoleucyl-tRNA(Ile) + AMP + diphosphate. In terms of biological role, catalyzes the attachment of isoleucine to tRNA(Ile). As IleRS can inadvertently accommodate and process structurally similar amino acids such as valine, to avoid such errors it has two additional distinct tRNA(Ile)-dependent editing activities. One activity is designated as 'pretransfer' editing and involves the hydrolysis of activated Val-AMP. The other activity is designated 'posttransfer' editing and involves deacylation of mischarged Val-tRNA(Ile). In Streptomyces coelicolor (strain ATCC BAA-471 / A3(2) / M145), this protein is Isoleucine--tRNA ligase.